The primary structure comprises 383 residues: Probable endopolygalacturonase C (383 aa).

Residues 1–16 (MVRQLILISSLLAAVA) form the signal peptide. A propeptide spanning residues 17–40 (VRAPADPAHPMVTEAPDVNLVEKR) is cleaved from the precursor. A disulfide bond links C44 and C62. 2 PbH1 repeats span residues 175-206 (STDLTMTDITVDNTDGDTDDLAANTDGFDIGE) and 207-228 (STYITITGAEIYNQDDCVAINS). The Proton donor role is filled by D221. C223 and C239 are joined by a disulfide. H243 is an active-site residue. PbH1 repeat units follow at residues 253-279 (RDDNTVKNVTFYDVNVLKSQQAIRIKT) and 287-309 (VSEVTYHEIAFSDATDYGIVIEQ). N-linked (GlcNAc...) asparagine glycosylation is present at N260. 2 disulfides stabilise this stretch: C348–C353 and C372–C381.

The protein belongs to the glycosyl hydrolase 28 family.

Its subcellular location is the secreted. It carries out the reaction (1,4-alpha-D-galacturonosyl)n+m + H2O = (1,4-alpha-D-galacturonosyl)n + (1,4-alpha-D-galacturonosyl)m.. Functionally, involved in maceration and soft-rotting of plant tissue. Hydrolyzes the 1,4-alpha glycosidic bonds of de-esterified pectate in the smooth region of the plant cell wall. The protein is Probable endopolygalacturonase C (pgaC) of Aspergillus niger.